We begin with the raw amino-acid sequence, 206 residues long: 2,3-bisphosphoglycerate-dependent phosphoglycerate mutase (206 aa).

Residues 9 to 16 (RHGQSEWN), 22 to 23 (TG), Arg61, 88 to 91 (ERDY), Lys99, 115 to 116 (RR), and 159 to 160 (GN) contribute to the substrate site. His10 (tele-phosphohistidine intermediate) is an active-site residue. Glu88 functions as the Proton donor/acceptor in the catalytic mechanism.

It belongs to the phosphoglycerate mutase family. BPG-dependent PGAM subfamily. Homodimer.

It carries out the reaction (2R)-2-phosphoglycerate = (2R)-3-phosphoglycerate. It functions in the pathway carbohydrate degradation; glycolysis; pyruvate from D-glyceraldehyde 3-phosphate: step 3/5. Functionally, catalyzes the interconversion of 2-phosphoglycerate and 3-phosphoglycerate. This Bartonella bacilliformis (strain ATCC 35685 / KC583 / Herrer 020/F12,63) protein is 2,3-bisphosphoglycerate-dependent phosphoglycerate mutase.